A 208-amino-acid polypeptide reads, in one-letter code: Small ribosomal subunit protein uS4 (208 aa).

The S4 RNA-binding domain occupies 98 to 164; the sequence is SRLDNVVYRM…DRIKFALELA (67 aa).

It belongs to the universal ribosomal protein uS4 family. As to quaternary structure, part of the 30S ribosomal subunit. Contacts protein S5. The interaction surface between S4 and S5 is involved in control of translational fidelity.

Its function is as follows. One of the primary rRNA binding proteins, it binds directly to 16S rRNA where it nucleates assembly of the body of the 30S subunit. Functionally, with S5 and S12 plays an important role in translational accuracy. The sequence is that of Small ribosomal subunit protein uS4 from Nitrosococcus oceani (strain ATCC 19707 / BCRC 17464 / JCM 30415 / NCIMB 11848 / C-107).